A 626-amino-acid polypeptide reads, in one-letter code: Interferon-induced GTP-binding protein MxC (626 aa).

One can recognise a Dynamin-type G domain in the interval 40–313; the sequence is DLNLPAIAVI…LVEHIAKNVP (274 aa). The segment at 50–57 is G1 motif; it reads GDQSSGKS. 50 to 57 is a binding site for GTP; sequence GDQSSGKS. The tract at residues 75–77 is G2 motif; the sequence is VTR. Positions 151–154 are G3 motif; the sequence is DLPG. GTP-binding positions include 151 to 155 and 220 to 223; these read DLPGI and TKPD. Residues 220 to 223 are G4 motif; sequence TKPD. The interval 252–255 is G5 motif; sequence KCRG. The GED domain occupies 534 to 624; sequence LRETAFHLTS…ALPKVVHSAN (91 aa).

This sequence belongs to the TRAFAC class dynamin-like GTPase superfamily. Dynamin/Fzo/YdjA family.

The protein localises to the cytoplasm. The polypeptide is Interferon-induced GTP-binding protein MxC (mxc) (Danio rerio (Zebrafish)).